The primary structure comprises 352 residues: MLMNSIYSFTLQELKKELTKNNIKAFVAEQIFDWIYSKHVDSFDEMKNISKENIEKLKQLFSFENMVVDKLQVDKHDGTVKFLLKLEDGNFIETVIMKFNYGYSVCVTSQIGCNMACKFCASGLIRKKRNITVGEFIKQFIIAKEYVEKNFNDKLTHMVVMGIGEPFDNFENLIQFFEVIKQQKGLCISPRKITVSTCGLVEKIKEFADLKNQVNLAILLHAPNNEIRNKIMPINKVYSLDKVIEAMDYYIKVTKRRVTIEYILIKDVNDSDENAVELAKLLKGKLCYVNLIPYNKVVENNYFRSVRGKQFFDVLKKNNIQATIRLERGSSIDAACGQLRIKKILELRNAKV.

The active-site Proton acceptor is Glu-93. One can recognise a Radical SAM core domain in the interval 99 to 333 (FNYGYSVCVT…IRLERGSSID (235 aa)). Cys-106 and Cys-336 are oxidised to a cystine. Positions 113, 117, and 120 each coordinate [4Fe-4S] cluster. S-adenosyl-L-methionine-binding positions include 164 to 165 (GE), Ser-196, and Asn-295. Cys-336 functions as the S-methylcysteine intermediate in the catalytic mechanism.

Belongs to the radical SAM superfamily. RlmN family. [4Fe-4S] cluster is required as a cofactor.

It localises to the cytoplasm. It carries out the reaction adenosine(2503) in 23S rRNA + 2 reduced [2Fe-2S]-[ferredoxin] + 2 S-adenosyl-L-methionine = 2-methyladenosine(2503) in 23S rRNA + 5'-deoxyadenosine + L-methionine + 2 oxidized [2Fe-2S]-[ferredoxin] + S-adenosyl-L-homocysteine. The enzyme catalyses adenosine(37) in tRNA + 2 reduced [2Fe-2S]-[ferredoxin] + 2 S-adenosyl-L-methionine = 2-methyladenosine(37) in tRNA + 5'-deoxyadenosine + L-methionine + 2 oxidized [2Fe-2S]-[ferredoxin] + S-adenosyl-L-homocysteine. Specifically methylates position 2 of adenine 2503 in 23S rRNA and position 2 of adenine 37 in tRNAs. This is Probable dual-specificity RNA methyltransferase RlmN from Malacoplasma penetrans (strain HF-2) (Mycoplasma penetrans).